A 281-amino-acid polypeptide reads, in one-letter code: Pantothenate synthetase (281 aa).

26–33 (MGYLHQGH) contributes to the ATP binding site. The Proton donor role is filled by His33. Gln57 is a (R)-pantoate binding site. A beta-alanine-binding site is contributed by Gln57. 143 to 146 (GQKD) is a binding site for ATP. Gln149 serves as a coordination point for (R)-pantoate. ATP is bound by residues Val172 and 180–183 (LSSR).

It belongs to the pantothenate synthetase family. Homodimer.

The protein localises to the cytoplasm. The enzyme catalyses (R)-pantoate + beta-alanine + ATP = (R)-pantothenate + AMP + diphosphate + H(+). It functions in the pathway cofactor biosynthesis; (R)-pantothenate biosynthesis; (R)-pantothenate from (R)-pantoate and beta-alanine: step 1/1. Its function is as follows. Catalyzes the condensation of pantoate with beta-alanine in an ATP-dependent reaction via a pantoyl-adenylate intermediate. In Chloroflexus aurantiacus (strain ATCC 29366 / DSM 635 / J-10-fl), this protein is Pantothenate synthetase.